Reading from the N-terminus, the 202-residue chain is dTTP/UTP pyrophosphatase (202 aa).

Aspartate 83 serves as the catalytic Proton acceptor.

This sequence belongs to the Maf family. YhdE subfamily. Requires a divalent metal cation as cofactor.

The protein localises to the cytoplasm. The catalysed reaction is dTTP + H2O = dTMP + diphosphate + H(+). The enzyme catalyses UTP + H2O = UMP + diphosphate + H(+). Nucleoside triphosphate pyrophosphatase that hydrolyzes dTTP and UTP. May have a dual role in cell division arrest and in preventing the incorporation of modified nucleotides into cellular nucleic acids. The polypeptide is dTTP/UTP pyrophosphatase (Polaromonas sp. (strain JS666 / ATCC BAA-500)).